Here is a 186-residue protein sequence, read N- to C-terminus: Holliday junction branch migration complex subunit RuvA (186 aa).

The tract at residues 1–63 (MNDYINGFLY…DNHFKYYGFF (63 aa)) is domain I. Residues 64-137 (NQLVRDLFEI…QKELFNNKIS (74 aa)) form a domain II region. Position 137 (serine 137) is a region of interest, flexible linker. Positions 137–186 (SEKKNKVITSLEKLGYKTKDIYKIIINVDEDLTIDELTKYVLEKLSYINN) are domain III.

The protein belongs to the RuvA family. In terms of assembly, homotetramer. Forms an RuvA(8)-RuvB(12)-Holliday junction (HJ) complex. HJ DNA is sandwiched between 2 RuvA tetramers; dsDNA enters through RuvA and exits via RuvB. An RuvB hexamer assembles on each DNA strand where it exits the tetramer. Each RuvB hexamer is contacted by two RuvA subunits (via domain III) on 2 adjacent RuvB subunits; this complex drives branch migration. In the full resolvosome a probable DNA-RuvA(4)-RuvB(12)-RuvC(2) complex forms which resolves the HJ.

The protein resides in the cytoplasm. The RuvA-RuvB-RuvC complex processes Holliday junction (HJ) DNA during genetic recombination and DNA repair, while the RuvA-RuvB complex plays an important role in the rescue of blocked DNA replication forks via replication fork reversal (RFR). RuvA specifically binds to HJ cruciform DNA, conferring on it an open structure. The RuvB hexamer acts as an ATP-dependent pump, pulling dsDNA into and through the RuvAB complex. HJ branch migration allows RuvC to scan DNA until it finds its consensus sequence, where it cleaves and resolves the cruciform DNA. The protein is Holliday junction branch migration complex subunit RuvA of Mycoplasma capricolum subsp. capricolum (strain California kid / ATCC 27343 / NCTC 10154).